A 176-amino-acid polypeptide reads, in one-letter code: KxDL motif-containing protein 1 (176 aa).

An N-acetylmethionine modification is found at Met-1. Residues 95 to 176 form a disordered region; the sequence is HPEAFSHIPE…HTDDEEMPGE (82 aa). Over residues 119–131 the composition is skewed to low complexity; sequence STTTTIATSEQST. The segment covering 132 to 145 has biased composition (polar residues); that stretch reads GSCDTSPDTVSPSL.

It belongs to the KXD1 family. In terms of assembly, component of the BLOC-one-related complex (BORC) which is composed of BLOC1S1, BLOC1S2, BORCS5, BORCS6, BORCS7, BORCS8, KXD1 and SNAPIN. Associates with the BLOC-1 complex. Interacts with BLOC1S1. Interacts with DTNBP1/BLOC1S7 (via coiled-coil domain).

The protein localises to the lysosome membrane. As part of the BORC complex may play a role in lysosomes movement and localization at the cell periphery. Associated with the cytosolic face of lysosomes, the BORC complex may recruit ARL8B and couple lysosomes to microtubule plus-end-directed kinesin motor. May also be involved in the biogenesis of lysosome-related organelles such as melanosomes. This chain is KxDL motif-containing protein 1 (KXD1), found in Bos taurus (Bovine).